The chain runs to 438 residues: Transposon Ty2-OR2 Gag polyprotein (438 aa).

Disordered stretches follow at residues 1 to 88, 365 to 397, and 419 to 438; these read MESQ…YQQH, NVSR…AKAH, and SSQY…TERI. Polar residues-rich tracts occupy residues 19–39 and 49–60; these read ASVT…SASN and KVNSQEETTPGT. The interval 295-397 is RNA-binding; that stretch reads ENNINVSDRL…SSKPRAAKAH (103 aa). A compositionally biased stretch (low complexity) spans 369 to 381; sequence TSPNTTNTKVTTR.

Homotrimer.

Its subcellular location is the cytoplasm. Its function is as follows. Capsid protein (CA) is the structural component of the virus-like particle (VLP), forming the shell that encapsulates the retrotransposons dimeric RNA genome. The particles are assembled from trimer-clustered units and there are holes in the capsid shells that allow for the diffusion of macromolecules. CA also has nucleocapsid-like chaperone activity, promoting primer tRNA(i)-Met annealing to the multipartite primer-binding site (PBS), dimerization of Ty2 RNA and initiation of reverse transcription. This is Transposon Ty2-OR2 Gag polyprotein (TY2A-OR2) from Saccharomyces cerevisiae (strain ATCC 204508 / S288c) (Baker's yeast).